A 247-amino-acid polypeptide reads, in one-letter code: NAD(P)H-quinone oxidoreductase subunit K (247 aa).

The [4Fe-4S] cluster site is built by Cys-63, Cys-64, Cys-128, and Cys-159. Residues 218–247 are disordered; it reads TRQAPPKELTEAIGMEVPPALASQKQKEEA.

It belongs to the complex I 20 kDa subunit family. In terms of assembly, NDH-1 can be composed of about 15 different subunits; different subcomplexes with different compositions have been identified which probably have different functions. It depends on [4Fe-4S] cluster as a cofactor.

The protein localises to the cellular thylakoid membrane. It carries out the reaction a plastoquinone + NADH + (n+1) H(+)(in) = a plastoquinol + NAD(+) + n H(+)(out). The enzyme catalyses a plastoquinone + NADPH + (n+1) H(+)(in) = a plastoquinol + NADP(+) + n H(+)(out). Functionally, NDH-1 shuttles electrons from an unknown electron donor, via FMN and iron-sulfur (Fe-S) centers, to quinones in the respiratory and/or the photosynthetic chain. The immediate electron acceptor for the enzyme in this species is believed to be plastoquinone. Couples the redox reaction to proton translocation, and thus conserves the redox energy in a proton gradient. Cyanobacterial NDH-1 also plays a role in inorganic carbon-concentration. The chain is NAD(P)H-quinone oxidoreductase subunit K from Crocosphaera subtropica (strain ATCC 51142 / BH68) (Cyanothece sp. (strain ATCC 51142)).